We begin with the raw amino-acid sequence, 311 residues long: D-alanine--D-alanine ligase (311 aa).

An ATP-grasp domain is found at 106-301; that stretch reads KLLWRGAELP…FDELCWRILL (196 aa). Position 132–187 (132–187) interacts with ATP; the sequence is IGSVGLPLMIKPAHEGSSIGMAKVERPEELEAARAEAARYDDLVLAERWIEGGEYT. Residues Asp255, Glu268, and Asn270 each contribute to the Mg(2+) site.

The protein belongs to the D-alanine--D-alanine ligase family. Mg(2+) is required as a cofactor. It depends on Mn(2+) as a cofactor.

The protein localises to the cytoplasm. The enzyme catalyses 2 D-alanine + ATP = D-alanyl-D-alanine + ADP + phosphate + H(+). It participates in cell wall biogenesis; peptidoglycan biosynthesis. In terms of biological role, cell wall formation. This is D-alanine--D-alanine ligase from Alkalilimnicola ehrlichii (strain ATCC BAA-1101 / DSM 17681 / MLHE-1).